The primary structure comprises 107 residues: Integration host factor subunit beta (107 aa).

A compositionally biased stretch (basic and acidic residues) spans Pro82–Glu101. Residues Pro82 to Leu107 are disordered.

This sequence belongs to the bacterial histone-like protein family. As to quaternary structure, heterodimer of an alpha and a beta chain.

This protein is one of the two subunits of integration host factor, a specific DNA-binding protein that functions in genetic recombination as well as in transcriptional and translational control. The chain is Integration host factor subunit beta from Paraburkholderia xenovorans (strain LB400).